We begin with the raw amino-acid sequence, 366 residues long: Spermidine/putrescine import ATP-binding protein PotA (366 aa).

The ABC transporter domain occupies 8–239 (IRFENVTKQF…PINKFVADFI (232 aa)). An ATP-binding site is contributed by 41–48 (GPSGCGKT).

Belongs to the ABC transporter superfamily. Spermidine/putrescine importer (TC 3.A.1.11.1) family. As to quaternary structure, the complex is composed of two ATP-binding proteins (PotA), two transmembrane proteins (PotB and PotC) and a solute-binding protein (PotD).

It is found in the cell membrane. It catalyses the reaction ATP + H2O + polyamine-[polyamine-binding protein]Side 1 = ADP + phosphate + polyamineSide 2 + [polyamine-binding protein]Side 1.. Part of the ABC transporter complex PotABCD involved in spermidine/putrescine import. Responsible for energy coupling to the transport system. This chain is Spermidine/putrescine import ATP-binding protein PotA, found in Listeria monocytogenes serotype 4b (strain F2365).